We begin with the raw amino-acid sequence, 250 residues long: Uridylate kinase (250 aa).

17 to 20 (KLSG) contributes to the ATP binding site. Glycine 59 is a binding site for UMP. 2 residues coordinate ATP: glycine 60 and arginine 64. Residues aspartate 79 and 140–147 (TGNPYFTT) contribute to the UMP site. Residues threonine 167, tyrosine 173, and aspartate 176 each contribute to the ATP site.

Belongs to the UMP kinase family. In terms of assembly, homohexamer.

The protein resides in the cytoplasm. It catalyses the reaction UMP + ATP = UDP + ADP. It participates in pyrimidine metabolism; CTP biosynthesis via de novo pathway; UDP from UMP (UMPK route): step 1/1. Its activity is regulated as follows. Inhibited by UTP. In terms of biological role, catalyzes the reversible phosphorylation of UMP to UDP. This chain is Uridylate kinase, found in Myxococcus xanthus (strain DK1622).